The sequence spans 57 residues: Conotoxin Cal6.34 (57 aa).

A signal peptide spans 1–22 (MKLTCVLIVAVLILTACQVIAA). 3 disulfide bridges follow: Cys26/Cys37, Cys29/Cys43, and Cys36/Cys54.

The protein belongs to the conotoxin O1 superfamily. In terms of tissue distribution, expressed by the venom duct.

It is found in the secreted. Probable neurotoxin. The chain is Conotoxin Cal6.34 from Californiconus californicus (California cone).